The sequence spans 595 residues: DNA mismatch repair protein MutL (595 aa).

Belongs to the DNA mismatch repair MutL/HexB family.

Functionally, this protein is involved in the repair of mismatches in DNA. It is required for dam-dependent methyl-directed DNA mismatch repair. May act as a 'molecular matchmaker', a protein that promotes the formation of a stable complex between two or more DNA-binding proteins in an ATP-dependent manner without itself being part of a final effector complex. The polypeptide is DNA mismatch repair protein MutL (Rhodopseudomonas palustris (strain TIE-1)).